Reading from the N-terminus, the 116-residue chain is MKTLVLLSALVLPCFQVQADPIQNTDEETKTEEQPEEEDQAVSVSFGGTEGSALQDVAQRRFPWCRKCRVCQKCQVCQKCPVCPTCPQCPKQPLCEERQNKTAITTQAPNTQHKGC.

The N-terminal stretch at 1 to 19 is a signal peptide; the sequence is MKTLVLLSALVLPCFQVQA. A propeptide spanning residues 20-60 is cleaved from the precursor; the sequence is DPIQNTDEETKTEEQPEEEDQAVSVSFGGTEGSALQDVAQR. Residues 22 to 44 form a disordered region; the sequence is IQNTDEETKTEEQPEEEDQAVSV. 9 repeat units span residues 65 to 67, 68 to 70, 71 to 73, 74 to 76, 77 to 79, 80 to 82, 83 to 85, 86 to 88, and 89 to 91. The tract at residues 65 to 70 is 2 X 3 AA tandem repeats of C-R-X; it reads CRKCRV. The interval 71 to 79 is 3 X 3 AA tandem repeats of C-Q-X; it reads CQKCQVCQK. The interval 80–91 is 4 X 3 AA tandem repeats of C-P-X; it reads CPVCPTCPQCPK.

This sequence belongs to the alpha-defensin family. Small bowel.

Its subcellular location is the secreted. Functionally, apparent precursor of a secreted, cationic, proline- and cysteine-rich peptide that contains Cys-Pro-Xaa repeats. Unlike cryptdin, the proposed mature peptide region lacks the structural motif characteristic of defensins. This chain is Alpha-defensin 29, found in Mus musculus (Mouse).